An 85-amino-acid chain; its full sequence is Beta-insect depressant toxin Lqh-dprIT3g (85 aa).

An N-terminal signal peptide occupies residues 1–21 (MKLLLLLTISASMLIEGLVNA). In terms of domain architecture, LCN-type CS-alpha/beta spans 22–82 (DGYIRGGDGC…EWDYETDTCG (61 aa)). 4 cysteine pairs are disulfide-bonded: C31–C81, C35–C56, C42–C63, and C46–C65. A Glycine amide modification is found at G82.

The protein belongs to the long (4 C-C) scorpion toxin superfamily. Sodium channel inhibitor family. Beta subfamily. As to expression, expressed by the venom gland.

It localises to the secreted. Depressant insect beta-toxins cause a transient contraction paralysis followed by a slow flaccid paralysis. They bind voltage-independently at site-4 of sodium channels (Nav) and block action potentials, primarily by depolarizing the axonal membrane and suppressing the sodium current. This depressant toxin is active only on insects. It is found in a relatively small amount in the venom. This chain is Beta-insect depressant toxin Lqh-dprIT3g, found in Leiurus hebraeus (Hebrew deathstalker scorpion).